The following is a 596-amino-acid chain: Protein FlbA (596 aa).

TPR repeat units follow at residues Gly-91 to His-124, Val-159 to Ala-192, Ala-193 to Phe-226, and Lys-228 to Pro-260.

This chain is Protein FlbA (flbA), found in Caulobacter vibrioides (strain ATCC 19089 / CIP 103742 / CB 15) (Caulobacter crescentus).